A 258-amino-acid chain; its full sequence is Acetylglutamate kinase (258 aa).

Substrate-binding positions include 44 to 45, R66, and N158; that span reads GG. Residues 181–186 and 209–211 each bind ATP; these read DVSGIL and IIT.

Belongs to the acetylglutamate kinase family. ArgB subfamily. In terms of assembly, homodimer.

It is found in the cytoplasm. It catalyses the reaction N-acetyl-L-glutamate + ATP = N-acetyl-L-glutamyl 5-phosphate + ADP. It participates in amino-acid biosynthesis; L-arginine biosynthesis; N(2)-acetyl-L-ornithine from L-glutamate: step 2/4. Catalyzes the ATP-dependent phosphorylation of N-acetyl-L-glutamate. This is Acetylglutamate kinase from Shigella flexneri serotype 5b (strain 8401).